A 348-amino-acid chain; its full sequence is Probable dual-specificity RNA methyltransferase RlmN (348 aa).

Catalysis depends on Glu93, which acts as the Proton acceptor. Residues 99 to 333 enclose the Radical SAM core domain; it reads TEKRLTACLS…VSFRKSRGLD (235 aa). A disulfide bond links Cys106 and Cys338. Residues Cys113, Cys117, and Cys120 each contribute to the [4Fe-4S] cluster site. S-adenosyl-L-methionine-binding positions include 160–161, Ser190, 219–221, and Asn295; these read GE and SLH. Catalysis depends on Cys338, which acts as the S-methylcysteine intermediate.

This sequence belongs to the radical SAM superfamily. RlmN family. It depends on [4Fe-4S] cluster as a cofactor.

Its subcellular location is the cytoplasm. It catalyses the reaction adenosine(2503) in 23S rRNA + 2 reduced [2Fe-2S]-[ferredoxin] + 2 S-adenosyl-L-methionine = 2-methyladenosine(2503) in 23S rRNA + 5'-deoxyadenosine + L-methionine + 2 oxidized [2Fe-2S]-[ferredoxin] + S-adenosyl-L-homocysteine. The enzyme catalyses adenosine(37) in tRNA + 2 reduced [2Fe-2S]-[ferredoxin] + 2 S-adenosyl-L-methionine = 2-methyladenosine(37) in tRNA + 5'-deoxyadenosine + L-methionine + 2 oxidized [2Fe-2S]-[ferredoxin] + S-adenosyl-L-homocysteine. Specifically methylates position 2 of adenine 2503 in 23S rRNA and position 2 of adenine 37 in tRNAs. The polypeptide is Probable dual-specificity RNA methyltransferase RlmN (Prochlorococcus marinus (strain MIT 9312)).